The primary structure comprises 935 residues: MASLSSSFLVLFLLFQNSCYCFRSPLSVFKRYEESTRSLSNDCLGTTRPVMSPGSSDYTLDIRMPGVTPTESDTYLCKSYRLPVDDEAYVVDFRPHANMDTAHHMLLFGCNIPSSTDDYWDCSAGTCMDKSSIMYAWAKNAPPTKLPEGVGFRVGGKSGSRYFVLQVHYGNVKAFQDKHKDCTGVTVRVTPEKQPQIAGIYLSMSVDTVIPPGEEAVNSDIACLYNRPTIHPFAYRVHTHQLGQVVSGFRVRHGKWSLIGRQSPQLPQAFYPVEHPVEISPGDIIATRCLFTGKGRTSATYIGGTSNDEMCNLYIMYYMDAAHATSYMTCVQTGEPKLFQNIPEIANVPIPVSPDMMMMMGHGHHHTEAEPEKNTGLQQPKREEEEVLDQDVHLEEDTDWPGVNLKVGQVSGLALDPKNNLAIFHRGDHVWDENSFDRNFVYQQRGIGPIQESTILVVDPSSSKVLKSTGKNLFFLPHGLTIDRDGNYWVTDVALHQVFKLGAGKETPLLVLGRAFQPGSDRKHFCQPTDVAVDPITGNFFVADGYCNSRIMQFSPNGMFIMQWGEETSSNVPRPGQFRIPHSLTMVPDQGQLCVADRENGRIQCFHAETGNFVKQIKHQEFGREVFAVSYAPGGVLYAVNGKPYYGYSAPVQGFMLNFSNGDILDTFIPARKNFDMPHDIAAADDGTVYVGDAHANAVWKFSPSKAEHRSVKKAGIEVEEITETEIFETHIRSRPKTNESVEKQTQEKQQKQKNSAGVSTQEKQNVVQEINAGVPTQEKQNVVQESSAGVPTQEKQSVVQESSAGVSTQEKQSVVQESSAGVSFVLIITLLIIPIAVLIAIAIFIRWRKVRMYGGDIDHKSESSSVGILGKLRGKGSGGLNLGTFFATHKGYSRKGFDRLSTEGSDQEKDDDDGSDSEEEYSAPPIPPAPVSSS.

The first 36 residues, 1–36, serve as a signal peptide directing secretion; the sequence is MASLSSSFLVLFLLFQNSCYCFRSPLSVFKRYEEST. A peptidylglycine alpha-hydroxylating monooxygenase region spans residues 1 to 390; sequence MASLSSSFLV…KREEEEVLDQ (390 aa). The Intragranular segment spans residues 37–825; that stretch reads RSLSNDCLGT…VQESSAGVSF (789 aa). Disulfide bonds link C43-C182, C77-C122, C110-C127, C223-C330, and C289-C311. Cu(2+)-binding residues include H103 and H104. Positions 168, 238, 240, and 310 each coordinate Cu(2+). Residues 362–385 are disordered; sequence HGHHHTEAEPEKNTGLQQPKREEE. A peptidyl-alpha-hydroxyglycine alpha-amidating lyase region spans residues 391 to 712; that stretch reads DVHLEEDTDW…SPSKAEHRSV (322 aa). Residue R426 coordinates a protein. NHL repeat units lie at residues 463 to 504, 512 to 557, and 565 to 609; these read SKVL…LGAG, LGRA…FSPN, and GEET…FHAE. 2 disulfides stabilise this stretch: C526–C547 and C594–C605. Positions 546 and 598 each coordinate a protein. A glycan (N-linked (GlcNAc...) asparagine) is linked at N658. Residues 662-705 form an NHL 4 repeat; that stretch reads GDILDTFIPARKNFDMPHDIAAADDGTVYVGDAHANAVWKFSPS. A compositionally biased stretch (basic and acidic residues) spans 728-751; sequence FETHIRSRPKTNESVEKQTQEKQQ. Disordered stretches follow at residues 728 to 764 and 778 to 812; these read FETHIRSRPKTNESVEKQTQEKQQKQKNSAGVSTQEK and QEKQNVVQESSAGVPTQEKQSVVQESSAGVSTQEK. The N-linked (GlcNAc...) asparagine glycan is linked to N739. A compositionally biased stretch (polar residues) spans 755–764; sequence NSAGVSTQEK. A helical membrane pass occupies residues 826-846; that stretch reads VLIITLLIIPIAVLIAIAIFI. The Cytoplasmic segment spans residues 847–935; the sequence is RWRKVRMYGG…PIPPAPVSSS (89 aa). A disordered region spans residues 896–935; the sequence is KGFDRLSTEGSDQEKDDDDGSDSEEEYSAPPIPPAPVSSS. Over residues 909-922 the composition is skewed to acidic residues; that stretch reads EKDDDDGSDSEEEY. Positions 925–935 are enriched in pro residues; that stretch reads PPIPPAPVSSS.

In the C-terminal section; belongs to the peptidyl-alpha-hydroxyglycine alpha-amidating lyase family. The protein in the N-terminal section; belongs to the copper type II ascorbate-dependent monooxygenase family. As to quaternary structure, monomer. It depends on Zn(2+) as a cofactor. Cu(2+) serves as cofactor.

It localises to the cytoplasmic vesicle. Its subcellular location is the secretory vesicle membrane. The catalysed reaction is a [peptide]-C-terminal glycine + 2 L-ascorbate + O2 = a [peptide]-C-terminal (2S)-2-hydroxyglycine + 2 monodehydro-L-ascorbate radical + H2O. It catalyses the reaction a [peptide]-C-terminal (2S)-2-hydroxyglycine = a [peptide]-C-terminal amide + glyoxylate. Its function is as follows. Bifunctional enzyme that catalyzes amidation of the C-terminus of proteins. Alpha-amidation is present at the C-terminus of many endocrine hormones and neuropeptides and is required for their activity. C-terminal amidation also takes place in response to protein fragmentation triggered by oxidative stress, promoting degradation of amidated protein fragments by the proteasome. Alpha-amidation involves two sequential reactions, both of which are catalyzed by separate catalytic domains of the enzyme. The first step, catalyzed by peptidyl alpha-hydroxylating monooxygenase (PHM) domain, is the copper-, ascorbate-, and O2- dependent stereospecific hydroxylation (with S stereochemistry) at the alpha-carbon (C-alpha) of the C-terminal glycine of the peptidylglycine substrate. The second step, catalyzed by the peptidylglycine amidoglycolate lyase (PAL) domain, is the zinc-dependent cleavage of the N-C-alpha bond, producing the alpha-amidated peptide and glyoxylate. In Xenopus laevis (African clawed frog), this protein is Peptidyl-glycine alpha-amidating monooxygenase A (pam-a).